We begin with the raw amino-acid sequence, 235 residues long: Orotidine 5'-phosphate decarboxylase (235 aa).

Substrate contacts are provided by residues Asp-17, Lys-39, 66–75, Thr-121, Arg-182, Gln-191, and Arg-212; that span reads DMKLLDIDHT. The active-site Proton donor is Lys-68.

It belongs to the OMP decarboxylase family. Type 1 subfamily. Homodimer.

It catalyses the reaction orotidine 5'-phosphate + H(+) = UMP + CO2. It functions in the pathway pyrimidine metabolism; UMP biosynthesis via de novo pathway; UMP from orotate: step 2/2. In terms of biological role, catalyzes the decarboxylation of orotidine 5'-monophosphate (OMP) to uridine 5'-monophosphate (UMP). The sequence is that of Orotidine 5'-phosphate decarboxylase from Bartonella bacilliformis.